We begin with the raw amino-acid sequence, 332 residues long: Ribosomal RNA small subunit methyltransferase C (332 aa).

This sequence belongs to the methyltransferase superfamily. RsmC family. In terms of assembly, monomer.

It is found in the cytoplasm. It carries out the reaction guanosine(1207) in 16S rRNA + S-adenosyl-L-methionine = N(2)-methylguanosine(1207) in 16S rRNA + S-adenosyl-L-homocysteine + H(+). Its function is as follows. Specifically methylates the guanine in position 1207 of 16S rRNA in the 30S particle. In Pseudomonas paraeruginosa (strain DSM 24068 / PA7) (Pseudomonas aeruginosa (strain PA7)), this protein is Ribosomal RNA small subunit methyltransferase C.